We begin with the raw amino-acid sequence, 424 residues long: Gamma-glutamyl phosphate reductase (424 aa).

The protein belongs to the gamma-glutamyl phosphate reductase family.

Its subcellular location is the cytoplasm. The catalysed reaction is L-glutamate 5-semialdehyde + phosphate + NADP(+) = L-glutamyl 5-phosphate + NADPH + H(+). It participates in amino-acid biosynthesis; L-proline biosynthesis; L-glutamate 5-semialdehyde from L-glutamate: step 2/2. Functionally, catalyzes the NADPH-dependent reduction of L-glutamate 5-phosphate into L-glutamate 5-semialdehyde and phosphate. The product spontaneously undergoes cyclization to form 1-pyrroline-5-carboxylate. The protein is Gamma-glutamyl phosphate reductase of Dehalococcoides mccartyi (strain ATCC BAA-2266 / KCTC 15142 / 195) (Dehalococcoides ethenogenes (strain 195)).